The chain runs to 280 residues: Ribosomal RNA small subunit methyltransferase A (280 aa).

6 residues coordinate S-adenosyl-L-methionine: His-15, Leu-17, Gly-42, Glu-64, Asp-89, and Asn-109.

This sequence belongs to the class I-like SAM-binding methyltransferase superfamily. rRNA adenine N(6)-methyltransferase family. RsmA subfamily.

It localises to the cytoplasm. The catalysed reaction is adenosine(1518)/adenosine(1519) in 16S rRNA + 4 S-adenosyl-L-methionine = N(6)-dimethyladenosine(1518)/N(6)-dimethyladenosine(1519) in 16S rRNA + 4 S-adenosyl-L-homocysteine + 4 H(+). Specifically dimethylates two adjacent adenosines (A1518 and A1519) in the loop of a conserved hairpin near the 3'-end of 16S rRNA in the 30S particle. May play a critical role in biogenesis of 30S subunits. In Prochlorococcus marinus (strain MIT 9313), this protein is Ribosomal RNA small subunit methyltransferase A.